We begin with the raw amino-acid sequence, 962 residues long: UBP9-binding protein bun107 (962 aa).

WD repeat units lie at residues 25-69 (DANC…GKAS), 77-116 (AHSA…ASCL), 121-162 (EHTD…EVMR), 172-211 (VVGP…RITD), 214-253 (GHTD…CLFS), and 302-339 (KQDA…NQDV). A compositionally biased stretch (low complexity) spans 568-578 (SPLRIRSRPSP). 2 disordered regions span residues 568-615 (SPLR…QIPS) and 702-758 (RAAS…PREL). Residues 707 to 723 (RVFSTGTSVTSPQALSK) show a composition bias toward polar residues. S717 bears the Phosphoserine mark. The span at 724–738 (TNNTVNNAANTENNT) shows a compositional bias: low complexity.

In terms of assembly, interacts with ubp9 and bun62.

The protein resides in the cytoplasm. Its subcellular location is the cell tip. In terms of biological role, required for the ubp9 recruitment to septa and cell tips but also for its enzymatic activity at these specific locations. The protein is UBP9-binding protein bun107 (bun107) of Schizosaccharomyces pombe (strain 972 / ATCC 24843) (Fission yeast).